The chain runs to 313 residues: 4-diphosphocytidyl-2-C-methyl-D-erythritol kinase (313 aa).

Residue K10 is part of the active site. 95 to 105 (PVTAGLGGGSS) provides a ligand contact to ATP. D136 is an active-site residue. Residues 289 to 313 (HPRVSPWRSPRSASSRSTRRSSRPT) are disordered. Over residues 292–304 (VSPWRSPRSASSR) the composition is skewed to low complexity.

This sequence belongs to the GHMP kinase family. IspE subfamily.

The catalysed reaction is 4-CDP-2-C-methyl-D-erythritol + ATP = 4-CDP-2-C-methyl-D-erythritol 2-phosphate + ADP + H(+). The protein operates within isoprenoid biosynthesis; isopentenyl diphosphate biosynthesis via DXP pathway; isopentenyl diphosphate from 1-deoxy-D-xylulose 5-phosphate: step 3/6. In terms of biological role, catalyzes the phosphorylation of the position 2 hydroxy group of 4-diphosphocytidyl-2C-methyl-D-erythritol. In Anaeromyxobacter sp. (strain K), this protein is 4-diphosphocytidyl-2-C-methyl-D-erythritol kinase.